Consider the following 147-residue polypeptide: Myoglobin (147 aa).

The 140-residue stretch at 2 to 141 (HDAELVLKCW…VIGDIDTYYK (140 aa)) folds into the Globin domain. A nitrite-binding site is contributed by His-60. His-60 contacts O2. His-89 contacts heme b.

It belongs to the globin family. Monomeric.

It is found in the cytoplasm. It localises to the sarcoplasm. The enzyme catalyses Fe(III)-heme b-[protein] + nitric oxide + H2O = Fe(II)-heme b-[protein] + nitrite + 2 H(+). It catalyses the reaction H2O2 + AH2 = A + 2 H2O. In terms of biological role, monomeric heme protein which primary function is to store oxygen and facilitate its diffusion within muscle tissues. Reversibly binds oxygen through a pentacoordinated heme iron and enables its timely and efficient release as needed during periods of heightened demand. Depending on the oxidative conditions of tissues and cells, and in addition to its ability to bind oxygen, it also has a nitrite reductase activity whereby it regulates the production of bioactive nitric oxide. Under stress conditions, like hypoxia and anoxia, it also protects cells against reactive oxygen species thanks to its pseudoperoxidase activity. The chain is Myoglobin (mb) from Cyprinus carpio (Common carp).